The sequence spans 488 residues: Malonate-semialdehyde dehydrogenase (488 aa).

NAD(+)-binding residues include A150, F152, K176, E179, R180, S229, and T251. The active-site Nucleophile is C284. E382 provides a ligand contact to NAD(+).

Belongs to the aldehyde dehydrogenase family. IolA subfamily. In terms of assembly, homotetramer.

The catalysed reaction is 3-oxopropanoate + NAD(+) + CoA + H2O = hydrogencarbonate + acetyl-CoA + NADH + H(+). It carries out the reaction 2-methyl-3-oxopropanoate + NAD(+) + CoA + H2O = propanoyl-CoA + hydrogencarbonate + NADH + H(+). It functions in the pathway polyol metabolism; myo-inositol degradation into acetyl-CoA; acetyl-CoA from myo-inositol: step 7/7. Its function is as follows. Catalyzes the oxidation of malonate semialdehyde (MSA) and methylmalonate semialdehyde (MMSA) into acetyl-CoA and propanoyl-CoA, respectively. Is involved in a myo-inositol catabolic pathway. Bicarbonate, and not CO2, is the end-product of the enzymatic reaction. The sequence is that of Malonate-semialdehyde dehydrogenase from Listeria monocytogenes serotype 4b (strain F2365).